We begin with the raw amino-acid sequence, 624 residues long: Altered inheritance of mitochondria protein 9, mitochondrial (624 aa).

The N-terminal 34 residues, 1–34 (MLSRVARCSRTLNQVTRNGQSGLFSAVLRTSIRQ), are a transit peptide targeting the mitochondrion.

The protein belongs to the AIM9 family.

It localises to the mitochondrion. The protein is Altered inheritance of mitochondria protein 9, mitochondrial (AIM9) of Candida albicans (strain WO-1) (Yeast).